Consider the following 431-residue polypeptide: Beta-1,4-glucuronyltransferase 1 (431 aa).

Residues methionine 1–lysine 11 are Cytoplasmic-facing. Residues valine 12–serine 32 traverse the membrane as a helical segment. Residues lysine 33 to cysteine 431 are Lumenal-facing. N-linked (GlcNAc...) asparagine glycosylation occurs at asparagine 216. 2 residues coordinate Mn(2+): aspartate 241 and aspartate 243. N-linked (GlcNAc...) asparagine glycosylation occurs at asparagine 314.

The protein belongs to the glycosyltransferase 49 family. Mn(2+) serves as cofactor.

The protein resides in the golgi apparatus membrane. It carries out the reaction 3-O-[beta-D-Xyl-(1-&gt;4)-Rib-ol-P-Rib-ol-P-3-beta-D-GalNAc-(1-&gt;3)-beta-D-GlcNAc-(1-&gt;4)-(O-6-P-alpha-D-Man)]-Thr-[protein] + UDP-alpha-D-glucuronate = 3-O-[beta-D-GlcA-(1-&gt;3)-beta-D-Xyl-(1-&gt;4)-Rib-ol-P-Rib-ol-P-3-beta-D-GalNAc-(1-&gt;3)-beta-D-GlcNAc-(1-&gt;4)-(O-6-P-alpha-D-Man)]-Thr-[protein] + UDP + H(+). The protein operates within protein modification; protein glycosylation. Beta-1,4-glucuronyltransferase involved in O-mannosylation of alpha-dystroglycan (DAG1). Transfers a glucuronic acid (GlcA) residue onto a xylose (Xyl) acceptor to produce the glucuronyl-beta-1,4-xylose-beta disaccharide primer, which is further elongated by LARGE, during synthesis of phosphorylated O-mannosyl glycan. Phosphorylated O-mannosyl glycan is a carbohydrate structure present in alpha-dystroglycan (DAG1), which is required for binding laminin G-like domain-containing extracellular proteins with high affinity. Required for axon guidance; via its function in O-mannosylation of alpha-dystroglycan (DAG1). This Danio rerio (Zebrafish) protein is Beta-1,4-glucuronyltransferase 1.